A 130-amino-acid chain; its full sequence is Small ribosomal subunit protein uS8 (130 aa).

It belongs to the universal ribosomal protein uS8 family. In terms of assembly, part of the 30S ribosomal subunit. Contacts proteins S5 and S12.

In terms of biological role, one of the primary rRNA binding proteins, it binds directly to 16S rRNA central domain where it helps coordinate assembly of the platform of the 30S subunit. The sequence is that of Small ribosomal subunit protein uS8 from Ruegeria sp. (strain TM1040) (Silicibacter sp.).